Consider the following 748-residue polypeptide: CCR4-NOT transcription complex subunit 10-A (748 aa).

A compositionally biased stretch (basic and acidic residues) spans 1–17 (MAADKAGEQGAEKHEDS). Disordered stretches follow at residues 1–25 (MAADKAGEQGAEKHEDSANCSGISD), 184–205 (SNNKNGKNNETNSNANNREPFA), 483–524 (KQEN…PPSS), and 605–635 (VSLGVSSNEQEQGSDKGENEPMESVGKQMPQ). The segment covering 185–200 (NNKNGKNNETNSNANN) has biased composition (low complexity). Polar residues-rich tracts occupy residues 487–509 (GSKTSSQTGNTDSGGESSEVCSN) and 605–615 (VSLGVSSNEQE).

Belongs to the CNOT10 family. As to quaternary structure, component of the CCR4-NOT complex. cnot10 and cnot11 form a subcomplex docked to the cnot1 scaffold.

The protein localises to the cytoplasm. It is found in the nucleus. Its function is as follows. Component of the CCR4-NOT complex which is one of the major cellular mRNA deadenylases and is linked to various cellular processes including bulk mRNA degradation, miRNA-mediated repression, translational repression during translational initiation and general transcription regulation. Additional complex functions may be a consequence of its influence on mRNA expression. Is not required for association of CNOT7 to the CCR4-NOT complex. This Xenopus laevis (African clawed frog) protein is CCR4-NOT transcription complex subunit 10-A (cnot10-a).